Consider the following 364-residue polypeptide: TD and POZ domain-containing protein 2 (364 aa).

Positions 19-149 (EFCYEWTISN…KDKLTLCCKV (131 aa)) constitute an MATH domain. The 68-residue stretch at 188-255 (TDCSLLVAGH…IYTGKAPTLH (68 aa)) folds into the BTB domain.

The protein belongs to the Tdpoz family.

The polypeptide is TD and POZ domain-containing protein 2 (Mus musculus (Mouse)).